The primary structure comprises 73 residues: MNFLCILFVVSLISSLSKCTTSSMKRELDLGMSRGHSGSQVGKALLGIQSANRTDGPGRKRRSFDLYALVNAK.

The signal sequence occupies residues 1–19 (MNFLCILFVVSLISSLSKC). Pro57 carries the proline amide modification. A propeptide spanning residues 61–73 (RRSFDLYALVNAK) is cleaved from the precursor.

It belongs to the diuretic hormone class 2 family. In terms of tissue distribution, expressed by the venom gland.

It localises to the secreted. Functionally, regulates fluid secretion. This Lychas mucronatus (Chinese swimming scorpion) protein is Venom protein 55.1.